Consider the following 54-residue polypeptide: Ribulose bisphosphate carboxylase large chain (54 aa).

A propeptide spanning residues 1–2 (MS) is cleaved from the precursor. An N-acetylproline modification is found at P3. The residue at position 14 (K14) is an N6,N6,N6-trimethyllysine.

Belongs to the RuBisCO large chain family. Type I subfamily. As to quaternary structure, heterohexadecamer of 8 large chains and 8 small chains.

It is found in the plastid. Its subcellular location is the chloroplast. The enzyme catalyses 2 (2R)-3-phosphoglycerate + 2 H(+) = D-ribulose 1,5-bisphosphate + CO2 + H2O. It catalyses the reaction D-ribulose 1,5-bisphosphate + O2 = 2-phosphoglycolate + (2R)-3-phosphoglycerate + 2 H(+). Its function is as follows. RuBisCO catalyzes two reactions: the carboxylation of D-ribulose 1,5-bisphosphate, the primary event in carbon dioxide fixation, as well as the oxidative fragmentation of the pentose substrate in the photorespiration process. Both reactions occur simultaneously and in competition at the same active site. This chain is Ribulose bisphosphate carboxylase large chain (rbcL), found in Ilex ciliospinosa (Sichuan holly).